Reading from the N-terminus, the 379-residue chain is Dual-specificity RNA methyltransferase RlmN (379 aa).

E95 serves as the catalytic Proton acceptor. A Radical SAM core domain is found at 101–345 (EETRGTLCVS…TTVRKTRGDD (245 aa)). C108 and C350 are disulfide-bonded. 3 residues coordinate [4Fe-4S] cluster: C115, C119, and C122. S-adenosyl-L-methionine contacts are provided by residues 176–177 (GE), S208, 230–232 (SLH), and N307. C350 serves as the catalytic S-methylcysteine intermediate.

The protein belongs to the radical SAM superfamily. RlmN family. The cofactor is [4Fe-4S] cluster.

It localises to the cytoplasm. It carries out the reaction adenosine(2503) in 23S rRNA + 2 reduced [2Fe-2S]-[ferredoxin] + 2 S-adenosyl-L-methionine = 2-methyladenosine(2503) in 23S rRNA + 5'-deoxyadenosine + L-methionine + 2 oxidized [2Fe-2S]-[ferredoxin] + S-adenosyl-L-homocysteine. It catalyses the reaction adenosine(37) in tRNA + 2 reduced [2Fe-2S]-[ferredoxin] + 2 S-adenosyl-L-methionine = 2-methyladenosine(37) in tRNA + 5'-deoxyadenosine + L-methionine + 2 oxidized [2Fe-2S]-[ferredoxin] + S-adenosyl-L-homocysteine. Functionally, specifically methylates position 2 of adenine 2503 in 23S rRNA and position 2 of adenine 37 in tRNAs. m2A2503 modification seems to play a crucial role in the proofreading step occurring at the peptidyl transferase center and thus would serve to optimize ribosomal fidelity. This is Dual-specificity RNA methyltransferase RlmN from Burkholderia lata (strain ATCC 17760 / DSM 23089 / LMG 22485 / NCIMB 9086 / R18194 / 383).